Here is a 70-residue protein sequence, read N- to C-terminus: Small ribosomal subunit protein eS17 (70 aa).

It belongs to the eukaryotic ribosomal protein eS17 family.

In Methanopyrus kandleri (strain AV19 / DSM 6324 / JCM 9639 / NBRC 100938), this protein is Small ribosomal subunit protein eS17.